We begin with the raw amino-acid sequence, 62 residues long: U-stichotoxin-Hau1a (62 aa).

An N-terminal signal peptide occupies residues 1–21; sequence MKPAIFLMLFVAMFLISEGEG. A propeptide spanning residues 22–31 is cleaved from the precursor; that stretch reads FKPKDAPQER. Residue proline 36 is modified to Hydroxyproline. Intrachain disulfides connect cysteine 41/cysteine 53 and cysteine 44/cysteine 59.

This sequence belongs to the Hau1a/HC18/HC19 family.

It is found in the secreted. Its subcellular location is the nematocyst. In terms of biological role, toxin that is lethal to crab. Does not produce the typical symptoms associated with sodium channel toxins in crabs, suggesting that it likely does not act on sodium channels. This is U-stichotoxin-Hau1a from Heteractis aurora (Banded sea anemone).